A 966-amino-acid chain; its full sequence is Polycystin-2 (966 aa).

Residues 1-106 are disordered; sequence MVNSRRVQPQ…DDDEVEGEEG (106 aa). The Cytoplasmic segment spans residues 1 to 217; that stretch reads MVNSRRVQPQ…NANREKYLKS (217 aa). Residues 30–44 are compositionally biased toward gly residues; it reads VAGGAGLAVPGGLGE. Positions 46–56 are enriched in basic and acidic residues; it reads RGLEIEMERIR. Over residues 58-79 the composition is skewed to low complexity; that stretch reads AAARDPPAGASASPSPPLSSCS. Phosphoserine is present on residues serine 72 and serine 76. Positions 91 to 105 are enriched in acidic residues; the sequence is EAEEDDDDDEVEGEE. Arginine 135 bears the Omega-N-methylarginine mark. The disordered stretch occupies residues 147–179; it reads HLSGRRRRLEDQGAQCPSPAGGGDPLHRHLPLE. Residues 218–239 traverse the membrane as a helical segment; it reads VLRELVTYLFFLVVLCILTYGM. Residues 240–466 lie on the Extracellular side of the membrane; that stretch reads MSSNVYYYTR…PVKLIRYVTA (227 aa). N-linked (GlcNAc...) asparagine glycosylation is found at asparagine 297, asparagine 303, and asparagine 326. Cysteines 329 and 342 form a disulfide. N-linked (GlcNAc...) asparagine glycans are attached at residues asparagine 360 and asparagine 373. A helical transmembrane segment spans residues 467–487; sequence FDFFLAACEIIFCFFIIYYVV. At 488-503 the chain is on the cytoplasmic side; that stretch reads EEILEIRIHRLSYFRS. The helical transmembrane segment at 504–524 threads the bilayer; the sequence is FWNCLDVVIVVLSVVAMVINI. At 525–550 the chain is on the extracellular side; sequence YRMSNAEGLLQFLEDQNSFPNFEHVA. The chain crosses the membrane as a helical span at residues 551–571; the sequence is YWQIQFNNISAVMVFLVWIKL. Glutamine 555 serves as a coordination point for cholesterol. At 572–595 the chain is on the cytoplasmic side; sequence FKFINFNRTMSQLSTTMSRCAKDL. The chain crosses the membrane as a helical span at residues 596 to 617; the sequence is FGFTIMFSIIFLAYAQLAYLVF. Over 618–629 the chain is Extracellular; sequence GTQVDDFSTFQE. Residues 630–644 constitute an intramembrane region (pore-forming); it reads CIFTQFRIILGDINF. A Ca(2+)-binding site is contributed by leucine 639. The short motif at 639 to 641 is the Selectivity filter element; it reads LGD. Topologically, residues 645-652 are extracellular; it reads AEIEEANR. A helical membrane pass occupies residues 653-673; it reads VLGPLYFTTFVFFMFFILLNM. The Cytoplasmic segment spans residues 674–966; that stretch reads FLAIINDSYS…GGNGSANVHA (293 aa). Residues 748-783 form the EF-hand domain; the sequence is HTDAEIEAIFTKYDQDGDQELTEREHQQMRDDLEKE. Ca(2+)-binding residues include aspartate 761, aspartate 763, aspartate 765, glutamate 767, and glutamate 772. The segment at 764–828 is disordered; the sequence is GDQELTEREH…GHSSRRRGSI (65 aa). Residues 768–793 show a composition bias toward basic and acidic residues; the sequence is LTEREHQQMRDDLEKEREDLDLEHSS. Low complexity predominate over residues 794-805; sequence LPRPMSSRSFPR. 4 positions are modified to phosphoserine: serine 799, serine 806, serine 810, and serine 827. A linker region spans residues 801 to 820; sequence RSFPRSLDDSEEEDDEDSGH. The tract at residues 808–819 is important for interaction with PACS1 and PACS2; the sequence is DDSEEEDDEDSG. Residues 831–870 adopt a coiled-coil conformation; the sequence is GVSYEEFQVLVRRVDRMEHSIGSIVSKIDAVIVKLEIMER. Residues 914-966 form a disordered region; that stretch reads WESDDAASQTGHGVSTQVGLGGQPHPRNPRPPSSQSAEGLEGGGGNGSANVHA. Over residues 919–931 the composition is skewed to polar residues; the sequence is AASQTGHGVSTQV.

The protein belongs to the polycystin family. As to quaternary structure, homotetramer. Component of the heterotetrameric polycystin channel complex with PKD1; the tetramer contains one PKD1 chain and three PKD2 chains. Interaction with PKD1 is required for ciliary localization. Isoform 1 interacts with PKD1 while isoform 3 does not. Interacts with PKD1L1. Interacts with CD2AP. Interacts with HAX1. Interacts with NEK8. Part of a complex containing AKAP5, ADCY5, ADCY6 and PDE4C. Interacts (via C-terminus) with TRPV4 (via C-terminus). Interacts (via C-terminal acidic region) with PACS1 and PACS2; these interactions retain the protein in the endoplasmic reticulum and prevent trafficking to the cell membrane. Interacts with TMEM33; enhancing its opening at the ER membrane. Interacts with TMEM120A; TMEM120A inhibits PKD2 channel activity through the physical association of PKD2 with TMEM120A. Interacts (via N-terminus) with RYR2; regulates RYR2 channel activity. In terms of processing, N-glycosylated. The four subunits in a tetramer probably differ in the extent of glycosylation; simultaneous glycosylation of all experimentally validated sites would probably create steric hindrance. Post-translationally, sumoylated by SUMO1; sumoylation regulates PKD2 membrane recycling and is necessary for intravascular pressure-induced arterial contractility. Phosphorylated. Phosphorylation is important for protein function; a mutant that lacks the N-terminal phosphorylation sites cannot complement a zebrafish pkd2-deficient mutant. PKD-mediated phosphorylation at the C-terminus regulates its function in the release of Ca(2+) stores from the endoplasmic reticulum. Phosphorylation at Ser-810 regulates PKD2 trafficking. Phosphorylation at Ser-72 is required for PKD2 trafficking to or retention at the lateral plasma membrane. Phosphorylation at Ser-799, Ser-810 and Ser-827 regulates PKD2 channel activity. Detected in kidney epithelium (at protein level). Highly expressed on basolateral membranes in distal convoluted tubules and medullary thick ascending limbs of Henle. Detected at much lower levels in cortical and medullary collecting tubules, and not detected in the glomerular tuft, in thin limbs of Henle, interstitium and blood vessels (at protein level). Expressed in mesenchymally derived structures in the developing embryo at day 12.5. Isoform 1 is predominantly expressed in kidney at all developmental stages with high levels also detected in lung. Isoform 3 shows highest expression in brain with lower expression in kidney and lung, low levels in thymus and is hardly detectable in liver.

The protein localises to the cell projection. It is found in the cilium membrane. It localises to the cell membrane. The protein resides in the basolateral cell membrane. Its subcellular location is the cytoplasmic vesicle membrane. The protein localises to the endoplasmic reticulum membrane. It is found in the golgi apparatus. It localises to the vesicle. The protein resides in the secreted. Its subcellular location is the extracellular exosome. The catalysed reaction is K(+)(in) = K(+)(out). The enzyme catalyses Na(+)(in) = Na(+)(out). It catalyses the reaction Ca(2+)(in) = Ca(2+)(out). Channel activity is regulated by phosphorylation. The channel is activated by increased cytoplasmic Ca(2+) (in the uM range) and by membrane depolarization. TMEM120A inhibits the channel activity of PKD2, and mediates mechanosensitivity of the PKD2-TMEM120A channel complex. At the endoplasmic reticulum membrane (ER), TMEM33 enhances its channel activity. PKD1/ PKD2 complex on the plasma membrane is activated by PKD1 N-terminus. Forms a nonselective cation channel. Can function as a homotetrameric ion channel or can form heteromer with PKD1. Displays distinct function depending on its subcellular localization and regulation by its binding partners. Functions as a cation channel, with a preference for monovalent cations over divalent cations that allows K(+), Na(+) and Ca(2+) influx, with low selectivity for Ca(2+). Involved in fluid-flow mechanosensation by the primary cilium in renal epithelium. In the endoplasmic reticulum, likely functions as a K(+) channel to facilitate Ca(2+) release. The heterotetrameric PKD1/PKD2 channel has higher Ca(2+) permeability than homomeric PKD2 channel and acts as a primarily Ca(2+)-permeable channel. PKD1 and PKD2 may function through a common signaling pathway that is necessary to maintain the normal, differentiated state of renal tubule cells. Interacts with and acts as a regulator of a number of other channels, such as TRPV4, TRPC1, IP3R, RYR2, ultimately further affecting intracellular signaling, to modulate intracellular Ca(2+) signaling. Together with TRPV4, forms mechano- and thermosensitive channels in cilium. In cardiomyocytes, PKD2 modulates Ca(2+) release from stimulated RYR2 receptors through direct association. Also involved in left-right axis specification via its role in sensing nodal flow; forms a complex with PKD1L1 in cilia to facilitate flow detection in left-right patterning. Acts as a regulator of cilium length together with PKD1. Mediates systemic blood pressure and contributes to the myogenic response in cerebral arteries though vasoconstriction. The chain is Polycystin-2 from Mus musculus (Mouse).